We begin with the raw amino-acid sequence, 264 residues long: Thymidylate synthase (264 aa).

Residue Arg-21 participates in dUMP binding. His-51 provides a ligand contact to (6R)-5,10-methylene-5,6,7,8-tetrahydrofolate. 126 to 127 (RR) serves as a coordination point for dUMP. Cys-146 (nucleophile) is an active-site residue. DUMP-binding positions include 166–169 (RSAD), Asn-177, and 207–209 (HLY). Asp-169 provides a ligand contact to (6R)-5,10-methylene-5,6,7,8-tetrahydrofolate. Ala-263 provides a ligand contact to (6R)-5,10-methylene-5,6,7,8-tetrahydrofolate.

Belongs to the thymidylate synthase family. Bacterial-type ThyA subfamily. As to quaternary structure, homodimer.

The protein resides in the cytoplasm. The enzyme catalyses dUMP + (6R)-5,10-methylene-5,6,7,8-tetrahydrofolate = 7,8-dihydrofolate + dTMP. It participates in pyrimidine metabolism; dTTP biosynthesis. Catalyzes the reductive methylation of 2'-deoxyuridine-5'-monophosphate (dUMP) to 2'-deoxythymidine-5'-monophosphate (dTMP) while utilizing 5,10-methylenetetrahydrofolate (mTHF) as the methyl donor and reductant in the reaction, yielding dihydrofolate (DHF) as a by-product. This enzymatic reaction provides an intracellular de novo source of dTMP, an essential precursor for DNA biosynthesis. In Hyphomonas neptunium (strain ATCC 15444), this protein is Thymidylate synthase.